The following is a 94-amino-acid chain: Small ribosomal subunit protein uS19 (94 aa).

It belongs to the universal ribosomal protein uS19 family.

In terms of biological role, protein S19 forms a complex with S13 that binds strongly to the 16S ribosomal RNA. The chain is Small ribosomal subunit protein uS19 from Desulforamulus reducens (strain ATCC BAA-1160 / DSM 100696 / MI-1) (Desulfotomaculum reducens).